Consider the following 430-residue polypeptide: 5-methylthioadenosine/S-adenosylhomocysteine deaminase (430 aa).

2 residues coordinate Zn(2+): His59 and His61. Substrate contacts are provided by Glu88 and His181. His208 contacts Zn(2+). Residues Glu211 and Asp296 each contribute to the substrate site. Asp296 is a Zn(2+) binding site.

Belongs to the metallo-dependent hydrolases superfamily. MTA/SAH deaminase family. It depends on Zn(2+) as a cofactor.

It catalyses the reaction S-adenosyl-L-homocysteine + H2O + H(+) = S-inosyl-L-homocysteine + NH4(+). The enzyme catalyses S-methyl-5'-thioadenosine + H2O + H(+) = S-methyl-5'-thioinosine + NH4(+). Catalyzes the deamination of 5-methylthioadenosine and S-adenosyl-L-homocysteine into 5-methylthioinosine and S-inosyl-L-homocysteine, respectively. Is also able to deaminate adenosine. This is 5-methylthioadenosine/S-adenosylhomocysteine deaminase from Aquifex aeolicus (strain VF5).